Here is a 223-residue protein sequence, read N- to C-terminus: Cytidylate kinase (223 aa).

10 to 18 provides a ligand contact to ATP; that stretch reads GPASSGKST.

This sequence belongs to the cytidylate kinase family. Type 1 subfamily.

It is found in the cytoplasm. The catalysed reaction is CMP + ATP = CDP + ADP. It catalyses the reaction dCMP + ATP = dCDP + ADP. This Streptococcus pneumoniae serotype 4 (strain ATCC BAA-334 / TIGR4) protein is Cytidylate kinase.